The sequence spans 195 residues: dCTP deaminase (195 aa).

Residues 110-115, D128, 136-138, Y171, K178, and Q182 contribute to the dCTP site; these read RSSLAR and VLE. The active-site Proton donor/acceptor is E138. Over residues 169 to 179 the composition is skewed to basic and acidic residues; that stretch reads RPYSSRKDAKY. Residues 169–195 are disordered; it reads RPYSSRKDAKYKNQQSAVASRIDEDKE.

This sequence belongs to the dCTP deaminase family. Homotrimer.

The catalysed reaction is dCTP + H2O + H(+) = dUTP + NH4(+). Its pathway is pyrimidine metabolism; dUMP biosynthesis; dUMP from dCTP (dUTP route): step 1/2. Its function is as follows. Catalyzes the deamination of dCTP to dUTP. In Haemophilus influenzae (strain 86-028NP), this protein is dCTP deaminase.